The sequence spans 187 residues: Photosystem I assembly protein Ycf4 (187 aa).

A run of 2 helical transmembrane segments spans residues 21–43 and 69–91; these read LSNY…AGIS and LLYG…WNVG.

This sequence belongs to the Ycf4 family.

The protein localises to the plastid. Its subcellular location is the cyanelle thylakoid membrane. Functionally, seems to be required for the assembly of the photosystem I complex. This is Photosystem I assembly protein Ycf4 from Cyanophora paradoxa.